Reading from the N-terminus, the 90-residue chain is Acylphosphatase (90 aa).

An Acylphosphatase-like domain is found at 5–90 (CLKAWVTGRV…DPPPGTFELG (86 aa)). Residues R20 and N38 contribute to the active site.

The protein belongs to the acylphosphatase family.

It catalyses the reaction an acyl phosphate + H2O = a carboxylate + phosphate + H(+). This chain is Acylphosphatase (acyP), found in Chromohalobacter salexigens (strain ATCC BAA-138 / DSM 3043 / CIP 106854 / NCIMB 13768 / 1H11).